Consider the following 346-residue polypeptide: Nicotinate-nucleotide--dimethylbenzimidazole phosphoribosyltransferase (346 aa).

Residue glutamate 312 is the Proton acceptor of the active site.

This sequence belongs to the CobT family.

It catalyses the reaction 5,6-dimethylbenzimidazole + nicotinate beta-D-ribonucleotide = alpha-ribazole 5'-phosphate + nicotinate + H(+). The protein operates within nucleoside biosynthesis; alpha-ribazole biosynthesis; alpha-ribazole from 5,6-dimethylbenzimidazole: step 1/2. Catalyzes the synthesis of alpha-ribazole-5'-phosphate from nicotinate mononucleotide (NAMN) and 5,6-dimethylbenzimidazole (DMB). This Cupriavidus taiwanensis (strain DSM 17343 / BCRC 17206 / CCUG 44338 / CIP 107171 / LMG 19424 / R1) (Ralstonia taiwanensis (strain LMG 19424)) protein is Nicotinate-nucleotide--dimethylbenzimidazole phosphoribosyltransferase.